Here is a 242-residue protein sequence, read N- to C-terminus: UPF0309 protein BH3325 (242 aa).

The SIS domain occupies 34-217 (VSEAVMNGGR…HLLVQQGFEP (184 aa)).

It belongs to the UPF0309 family.

In Halalkalibacterium halodurans (strain ATCC BAA-125 / DSM 18197 / FERM 7344 / JCM 9153 / C-125) (Bacillus halodurans), this protein is UPF0309 protein BH3325.